A 353-amino-acid chain; its full sequence is UPF0283 membrane protein KPK_3110 (353 aa).

The next 3 membrane-spanning stretches (helical) occupy residues 70–90 (MVSA…VQWT), 99–119 (WIAL…VGSV), and 213–233 (ESTL…FIAW).

The protein belongs to the UPF0283 family.

The protein resides in the cell inner membrane. This chain is UPF0283 membrane protein KPK_3110, found in Klebsiella pneumoniae (strain 342).